The sequence spans 304 residues: tRNA pseudouridine synthase A (304 aa).

Asp65 serves as the catalytic Nucleophile. Tyr123 serves as a coordination point for substrate. Positions 274–304 are disordered; that stretch reads HTGQEKPEARLGNGDLESREERPPHEMSPLH. The span at 289-298 shows a compositional bias: basic and acidic residues; the sequence is LESREERPPH.

Belongs to the tRNA pseudouridine synthase TruA family. Homodimer.

It catalyses the reaction uridine(38/39/40) in tRNA = pseudouridine(38/39/40) in tRNA. Functionally, formation of pseudouridine at positions 38, 39 and 40 in the anticodon stem and loop of transfer RNAs. This chain is tRNA pseudouridine synthase A, found in Gloeobacter violaceus (strain ATCC 29082 / PCC 7421).